Reading from the N-terminus, the 484-residue chain is MKSSVEQLSPTRVRIKVEVPFAELEPDFQRAYKELAKQVRLPGFRPGRAPVKLLEARFGREAMLDQIVNDAVPSRYGQALAESEIQPLGRPDIEVTQKEYGQDLAFTAEVDVRPEIALPDLTGLSVSVDAIEATDDEVNAELESLRARFGTLTEVERPVATGDFISIDLSAAVDGEDVPNAAAEGLSHEVGSGRLIAGLDDAVVGLSVDESRVFTAKLAAGDHAGRDAEVTVTVKSVKERELPEPDDEFAQLASEFDTIDELRASLREQVLQAKRVGQAEQIRNATIDALLERVDVPTPESYVQAQYEGVLHSALSGINNDEARFNELLVEQGSSRDAFDAEARTASEKDVKRQLLLDALADDLKVQVGQEDLTERLVLTSRQYGIEPQQLFAYLQENNQLPSMFADVRRELAVKAVAQAATVTDTDGNTIDTSEFFGKPPENDVTDLLDDDADGDAGVDADGDTENSAEPADADSADAAQGAG.

A PPIase FKBP-type domain is found at 162–243 (GDFISIDLSA…VKSVKERELP (82 aa)). Residues 427 to 484 (DGNTIDTSEFFGKPPENDVTDLLDDDADGDAGVDADGDTENSAEPADADSADAAQGAG) form a disordered region. Residues 444–476 (DVTDLLDDDADGDAGVDADGDTENSAEPADADS) show a composition bias toward acidic residues.

It belongs to the FKBP-type PPIase family. Tig subfamily.

The protein resides in the cytoplasm. The catalysed reaction is [protein]-peptidylproline (omega=180) = [protein]-peptidylproline (omega=0). Involved in protein export. Acts as a chaperone by maintaining the newly synthesized protein in an open conformation. Functions as a peptidyl-prolyl cis-trans isomerase. The protein is Trigger factor of Mycobacterium marinum (strain ATCC BAA-535 / M).